Reading from the N-terminus, the 327-residue chain is Ribose 1,5-bisphosphate isomerase (327 aa).

Substrate is bound by residues 25-28 (RGAA) and Arg-68. Cys-133 serves as the catalytic Proton acceptor. Catalysis depends on Asp-202, which acts as the Proton donor. Substrate-binding positions include 212 to 213 (NK) and Lys-238.

This sequence belongs to the eIF-2B alpha/beta/delta subunits family. R15P isomerase subfamily.

The enzyme catalyses alpha-D-ribose 1,5-bisphosphate = D-ribulose 1,5-bisphosphate. Its function is as follows. Isomerase involved in the non-carboxylating pentose bisphosphate pathway, a nucleoside degradation pathway present in some halophilic archaea. Catalyzes the isomerization of ribose 1,5-bisphosphate (R15P) to ribulose 1,5-bisphosphate (RuBP). This chain is Ribose 1,5-bisphosphate isomerase, found in Haloterrigena turkmenica (strain ATCC 51198 / DSM 5511 / JCM 9101 / NCIMB 13204 / VKM B-1734 / 4k) (Halococcus turkmenicus).